The sequence spans 208 residues: Small ribosomal subunit protein uS4 (208 aa).

An S4 RNA-binding domain is found at 98 to 161; that stretch reads QRLDNVVYRM…KTNPQIVRAI (64 aa).

This sequence belongs to the universal ribosomal protein uS4 family. As to quaternary structure, part of the 30S ribosomal subunit. Contacts protein S5. The interaction surface between S4 and S5 is involved in control of translational fidelity.

Functionally, one of the primary rRNA binding proteins, it binds directly to 16S rRNA where it nucleates assembly of the body of the 30S subunit. With S5 and S12 plays an important role in translational accuracy. The sequence is that of Small ribosomal subunit protein uS4 from Campylobacter fetus subsp. fetus (strain 82-40).